We begin with the raw amino-acid sequence, 152 residues long: Small ribosomal subunit protein uS17A (152 aa).

It belongs to the universal ribosomal protein uS17 family. In terms of assembly, component of the small ribosomal subunit (SSU). Mature yeast ribosomes consist of a small (40S) and a large (60S) subunit. The 40S small subunit contains 1 molecule of ribosomal RNA (18S rRNA) and at least 33 different proteins. The large 60S subunit contains 3 rRNA molecules (25S, 5.8S and 5S rRNA) and at least 46 different proteins.

It localises to the cytoplasm. It is found in the nucleus. In terms of biological role, component of the ribosome, a large ribonucleoprotein complex responsible for the synthesis of proteins in the cell. The small ribosomal subunit (SSU) binds messenger RNAs (mRNAs) and translates the encoded message by selecting cognate aminoacyl-transfer RNA (tRNA) molecules. The large subunit (LSU) contains the ribosomal catalytic site termed the peptidyl transferase center (PTC), which catalyzes the formation of peptide bonds, thereby polymerizing the amino acids delivered by tRNAs into a polypeptide chain. The nascent polypeptides leave the ribosome through a tunnel in the LSU and interact with protein factors that function in enzymatic processing, targeting, and the membrane insertion of nascent chains at the exit of the ribosomal tunnel. The chain is Small ribosomal subunit protein uS17A (rps1101) from Schizosaccharomyces pombe (strain 972 / ATCC 24843) (Fission yeast).